The following is a 598-amino-acid chain: Aspartate--tRNA(Asp/Asn) ligase (598 aa).

An L-aspartate-binding site is contributed by Glu-177. Residues 201–204 are aspartate; sequence QLFK. Arg-223 serves as a coordination point for L-aspartate. ATP is bound by residues 223 to 225 and Gln-232; that span reads RDE. His-456 is an L-aspartate binding site. ATP is bound at residue Glu-493. Arg-500 is a binding site for L-aspartate. Position 545 to 548 (545 to 548) interacts with ATP; it reads GLDR.

The protein belongs to the class-II aminoacyl-tRNA synthetase family. Type 1 subfamily. Homodimer.

It is found in the cytoplasm. The enzyme catalyses tRNA(Asx) + L-aspartate + ATP = L-aspartyl-tRNA(Asx) + AMP + diphosphate. In terms of biological role, aspartyl-tRNA synthetase with relaxed tRNA specificity since it is able to aspartylate not only its cognate tRNA(Asp) but also tRNA(Asn). Reaction proceeds in two steps: L-aspartate is first activated by ATP to form Asp-AMP and then transferred to the acceptor end of tRNA(Asp/Asn). In Prochlorococcus marinus (strain MIT 9215), this protein is Aspartate--tRNA(Asp/Asn) ligase.